The sequence spans 162 residues: Ribosome maturation factor RimP (162 aa).

Belongs to the RimP family.

The protein localises to the cytoplasm. Functionally, required for maturation of 30S ribosomal subunits. This chain is Ribosome maturation factor RimP, found in Cupriavidus taiwanensis (strain DSM 17343 / BCRC 17206 / CCUG 44338 / CIP 107171 / LMG 19424 / R1) (Ralstonia taiwanensis (strain LMG 19424)).